Here is a 223-residue protein sequence, read N- to C-terminus: MRSLACERDERLLFSDLSANFEAGDIVQILGSNGAGKTTLMRIVAGLSDSYTGEVLWNNAPHRGYDFFASVLYFGHATGVKQTLTALENLRWYFGLNGNKNTSAQAIDVSEAQLEAALHKVGLAGYEDVPCHQMSAGQKRRVALARLYCSKAPIWLLDEPFTAIDVGGVQQLESLIRAHAESGGIVLLTSHQPVSVPNLKTVDINQYRPLRGQKSDMAVGNDY.

The 223-residue stretch at 1–223 folds into the ABC transporter domain; the sequence is MRSLACERDE…KSDMAVGNDY (223 aa). Residue 31-38 participates in ATP binding; sequence GSNGAGKT.

It belongs to the ABC transporter superfamily. CcmA exporter (TC 3.A.1.107) family. The complex is composed of two ATP-binding proteins (CcmA) and two transmembrane proteins (CcmB).

The protein localises to the cell inner membrane. The enzyme catalyses heme b(in) + ATP + H2O = heme b(out) + ADP + phosphate + H(+). Its function is as follows. Part of the ABC transporter complex CcmAB involved in the biogenesis of c-type cytochromes; once thought to export heme, this seems not to be the case, but its exact role is uncertain. Responsible for energy coupling to the transport system. This chain is Cytochrome c biogenesis ATP-binding export protein CcmA, found in Saccharophagus degradans (strain 2-40 / ATCC 43961 / DSM 17024).